The primary structure comprises 490 residues: Ribulose bisphosphate carboxylase large chain (490 aa).

Residues Asn127 and Thr177 each coordinate substrate. The Proton acceptor role is filled by Lys179. Substrate is bound at residue Lys181. Residues Lys205, Asp207, and Glu208 each contribute to the Mg(2+) site. The residue at position 205 (Lys205) is an N6-carboxylysine. His297 (proton acceptor) is an active-site residue. Substrate-binding residues include Arg298, His330, and Ser382.

It belongs to the RuBisCO large chain family. Type I subfamily. In terms of assembly, heterohexadecamer of 8 large chains and 8 small chains. The cofactor is Mg(2+).

Its subcellular location is the plastid. It is found in the chloroplast. It catalyses the reaction 2 (2R)-3-phosphoglycerate + 2 H(+) = D-ribulose 1,5-bisphosphate + CO2 + H2O. It carries out the reaction D-ribulose 1,5-bisphosphate + O2 = 2-phosphoglycolate + (2R)-3-phosphoglycerate + 2 H(+). Its function is as follows. RuBisCO catalyzes two reactions: the carboxylation of D-ribulose 1,5-bisphosphate, the primary event in carbon dioxide fixation, as well as the oxidative fragmentation of the pentose substrate in the photorespiration process. Both reactions occur simultaneously and in competition at the same active site. The chain is Ribulose bisphosphate carboxylase large chain from Phaeodactylum tricornutum (strain CCAP 1055/1).